Consider the following 386-residue polypeptide: Beta-citrylglutamate synthase B (386 aa).

The ATP-grasp domain maps to 119–304; sequence FQELAGHGVP…VAGIIADYAA (186 aa). Residues K158, 193 to 203, and R219 contribute to the ATP site; that span reads QKYVKESHGRD. Mg(2+) contacts are provided by D264, E277, and N279. The Mn(2+) site is built by D264, E277, and N279. Residues 325-359 are disordered; that stretch reads ASETSEPELGPPASTAVDNMSASSSSVDSDPESTE. Over residues 338-352 the composition is skewed to low complexity; it reads STAVDNMSASSSSVD.

The protein belongs to the RimK family. Requires Mg(2+) as cofactor. Mn(2+) serves as cofactor.

The protein resides in the cytoplasm. It catalyses the reaction citrate + L-glutamate + ATP = beta-citrylglutamate + ADP + phosphate + H(+). It carries out the reaction N-acetyl-L-aspartate + L-glutamate + ATP = N-acetyl-L-aspartyl-L-glutamate + ADP + phosphate + H(+). Catalyzes the synthesis of beta-citryl-L-glutamate and N-acetyl-L-aspartyl-L-glutamate. Beta-citryl-L-glutamate is synthesized more efficiently than N-acetyl-L-aspartyl-L-glutamate. The chain is Beta-citrylglutamate synthase B (RIMKLB) from Homo sapiens (Human).